The sequence spans 403 residues: Large ribosomal subunit protein uL3 (403 aa).

A disordered region spans residues 1–38; sequence MSHRKFSAPRHGSLGFLPRKRSSRHRGKVKSFPKDDSS. At Ser-13 the chain carries Phosphoserine. Basic residues predominate over residues 18 to 31; sequence PRKRSSRHRGKVKS. A Glycyl lysine isopeptide (Lys-Gly) (interchain with G-Cter in SUMO2) cross-link involves residue Lys-39. Lys-136 carries the post-translational modification N6-acetyllysine. Glycyl lysine isopeptide (Lys-Gly) (interchain with G-Cter in SUMO2) cross-links involve residues Lys-224 and Lys-226. Residue His-245 is modified to Tele-methylhistidine. An N6-acetyllysine; alternate mark is found at Lys-286 and Lys-294. Lys-286 is covalently cross-linked (Glycyl lysine isopeptide (Lys-Gly) (interchain with G-Cter in SUMO2); alternate). Residue Lys-294 forms a Glycyl lysine isopeptide (Lys-Gly) (interchain with G-Cter in SUMO1); alternate linkage. Ser-304 is modified (phosphoserine). Residue Lys-366 is modified to N6-acetyllysine; alternate. Lys-366 is covalently cross-linked (Glycyl lysine isopeptide (Lys-Gly) (interchain with G-Cter in SUMO2); alternate). Lys-373 carries the N6-acetyllysine modification. Glycyl lysine isopeptide (Lys-Gly) (interchain with G-Cter in SUMO2) cross-links involve residues Lys-386, Lys-393, and Lys-399.

It belongs to the universal ribosomal protein uL3 family. In terms of assembly, component of the large ribosomal subunit. Interacts with DHX33. In terms of processing, constitutively monomethylated at His-245 by METTL18. Methylation at His-245 regulates translation elongation by slowing ribosome traversal on tyrosine codons: slower elongation provides enough time for proper folding of synthesized proteins and prevents cellular aggregation of tyrosine-rich proteins It is not required for incorporation of RPL3 into ribosomes.

It is found in the nucleus. It localises to the nucleolus. The protein resides in the cytoplasm. In terms of biological role, component of the large ribosomal subunit. The ribosome is a large ribonucleoprotein complex responsible for the synthesis of proteins in the cell. This Bos taurus (Bovine) protein is Large ribosomal subunit protein uL3 (RPL3).